The chain runs to 108 residues: Large ribosomal subunit protein uL24 (108 aa).

The protein belongs to the universal ribosomal protein uL24 family. Part of the 50S ribosomal subunit.

In terms of biological role, one of two assembly initiator proteins, it binds directly to the 5'-end of the 23S rRNA, where it nucleates assembly of the 50S subunit. Functionally, one of the proteins that surrounds the polypeptide exit tunnel on the outside of the subunit. The sequence is that of Large ribosomal subunit protein uL24 from Mycoplasmopsis pulmonis (strain UAB CTIP) (Mycoplasma pulmonis).